The following is a 268-amino-acid chain: AN1-type zinc finger protein 1 (268 aa).

Position 2 is an N-acetylalanine (alanine 2). AN1-type zinc fingers lie at residues leucine 4–glutamate 52 and glutamate 58–proline 106. The Zn(2+) site is built by cysteine 10, cysteine 15, cysteine 25, cysteine 28, cysteine 33, histidine 36, histidine 42, cysteine 44, cysteine 64, cysteine 69, cysteine 79, cysteine 82, cysteine 87, histidine 90, histidine 96, and cysteine 98. The interval glutamine 160–leucine 260 is ubiquitin-like.

Associates with the 26S proteasome; this association occurs upon exposure to arsenite and is reduced in the presence of ATP. Interacts (via AN1-type 1 and 2 zinc fingers) with PSMD1; this interaction is increased upon arsenite treatment and occurs in an ATP-independent manner. Interacts with PSMC4. Interacts with PSMA1. Interacts (via its ubiquitin-like region) with VCP; this interaction occurs in an arsenite-dependent manner and is necessary for the recruitment of the ubiquitin-selective ATPase VCP to stress granules (SGs).

Its subcellular location is the cytoplasm. It is found in the stress granule. Plays a role in the regulation of cytoplasmic stress granules (SGs) turnover. SGs are dynamic and transient cytoplasmic ribonucleoprotein assemblies important for cellular protein homeostasis when protein production is suspended after acute exogenous stress. Associates with SGs and is involved in the efficient and specific arsenite-induced clearance process of SGs through the recruitment of the ubiquitin-selective ATPase VCP and the 26S proteasome. This process requires both complexes for efficient degradation of damaged ubiquitinated SG proteins during recovery from arsenite stress, and hence avoiding aberrant cytoplasmic SGs degradation via autophagy. This chain is AN1-type zinc finger protein 1, found in Mus musculus (Mouse).